Consider the following 331-residue polypeptide: MAIELEGLGLSPELADVMTRLARVGADLARTIARNGVETDLAAGVGTNAGGDGQKALDVMADDAFREALTGTAVAYYASEEQDEVVTLGKGTLALAIDPLDGSSNIDVNVSIGTIFSIFPATDDPNTSFLRKGSEQIAGGYIIYGPQCALVCSFGRGVHHWVLDLDSRSFKRLPDIKALPQDTSEYAINASNYRHWPSPIRAFIDDLVAGAEGPRGRNFNMRWIASLVAETHRILMRGGVFLYPGDERKGYARGRLRHVYECAPIAFLITQVGGGATDGCEDILSALPDKLHARTPFVFGCAAKVARVTAYHDLPGEETSALFNTRGLFRS.

Residues E80, D98, L100, and D101 each coordinate Mg(2+). Residues 101 to 104 and N189 each bind substrate; that span reads DGSS. E261 serves as a coordination point for Mg(2+).

It belongs to the FBPase class 1 family. In terms of assembly, homotetramer. It depends on Mg(2+) as a cofactor.

The protein localises to the cytoplasm. The catalysed reaction is beta-D-fructose 1,6-bisphosphate + H2O = beta-D-fructose 6-phosphate + phosphate. It functions in the pathway carbohydrate biosynthesis; gluconeogenesis. In Rhodobacter capsulatus (strain ATCC BAA-309 / NBRC 16581 / SB1003), this protein is Fructose-1,6-bisphosphatase class 1.